Here is a 287-residue protein sequence, read N- to C-terminus: Aquaporin PIP2-1 (287 aa).

Position 1 is an N-acetylmethionine (methionine 1). At 2 to 39 (AKDVEAVPGEGFQTRDYQDPPPAPFIDGAELKKWSFYR) the chain is on the cytoplasmic side. Lysine 3 carries the N6,N6-dimethyllysine; partial modification. Residues 40-60 (AVIAEFVATLLFLYITVLTVI) form a helical membrane-spanning segment. The Extracellular portion of the chain corresponds to 61–83 (GYKIQSDTDAGGVDCGGVGILGI). Residues 84 to 104 (AWAFGGMIFILVYCTAGISGG) form a helical membrane-spanning segment. Over 105 to 125 (HINPAVTFGLFLARKVSLPRA) the chain is Cytoplasmic. The NPA 1 motif lies at 107–109 (NPA). A helical membrane pass occupies residues 126–146 (LLYIIAQCLGAICGVGFVKAF). Topologically, residues 147–167 (QSSYYTRYGGGANSLADGYST) are extracellular. The helical transmembrane segment at 168–188 (GTGLAAEIIGTFVLVYTVFSA) threads the bilayer. Topologically, residues 189-201 (TDPKRSARDSHVP) are cytoplasmic. The chain crosses the membrane as a helical span at residues 202-222 (VLAPLPIGFAVFMVHLATIPI). Topologically, residues 223 to 249 (TGTGINPARSFGAAVIYNKSKPWDDHW) are extracellular. Positions 228–230 (NPA) match the NPA 2 motif. A helical membrane pass occupies residues 250–270 (IFWVGPFIGAAIAAFYHQFVL). Residues 271 to 287 (RASGSKSLGSFRSAANV) lie on the Cytoplasmic side of the membrane. Phosphoserine is present on residues serine 280 and serine 283.

The protein belongs to the MIP/aquaporin (TC 1.A.8) family. PIP (TC 1.A.8.11) subfamily. In terms of processing, ubiquitinated by RMA1, leading to proteasomal degradation. Post-translationally, the phosphorylation at Ser-280 and Ser-283 is altered by salt (NaCl) and hydrogen peroxide H(2)O(2) treatments. Phosphorylation of Ser-283 is required for plasma membrane targeting. As to expression, predominantly expressed in roots and green siliques. Also expressed at lower level above ground and in flower buds.

It is found in the cell membrane. Water channel required to facilitate the transport of water across cell membrane. Probably involved in root water uptake. Its function is impaired by Hg(2+). In Arabidopsis thaliana (Mouse-ear cress), this protein is Aquaporin PIP2-1 (PIP2-1).